A 238-amino-acid chain; its full sequence is CD63 antigen (238 aa).

The Cytoplasmic portion of the chain corresponds to 1–11 (MAVEGGMKCVK). Residues 12–32 (FLLYVLLLAFCACAVGLIAVG) form a helical membrane-spanning segment. The Extracellular segment spans residues 33-51 (VGAQLVLSQTITHGATPGS). The helical transmembrane segment at 52–72 (LLPVVIIAVGAFLFLVAFVGC) threads the bilayer. Topologically, residues 73-81 (CGTCKENYC) are cytoplasmic. Residues 82–102 (LMITFAIFLSLIMLVEVAAAI) form a helical membrane-spanning segment. At 103-203 (AGYVFRDKVM…KIGLWLRKNV (101 aa)) the chain is on the extracellular side. Asn-125, Asn-130, Asn-150, and Asn-172 each carry an N-linked (GlcNAc...) asparagine glycan. Residues 204–224 (LVVAAAALGIAFVEVLGIVFA) traverse the membrane as a helical segment. The Cytoplasmic portion of the chain corresponds to 225 to 238 (CCLVKSIRSGYEVM). The Lysosomal targeting motif signature appears at 234–238 (GYEVM).

The protein belongs to the tetraspanin (TM4SF) family. In terms of assembly, interacts with TIMP1 and ITGB1 and recruits TIMP1 to ITGB1. Interacts with CD9. Identified in a complex with CD9 and ITGB3. Interacts with PMEL. Interacts with KDR/VEGFR2; identified in a complex with ITGB1 and KDR/VEGFR2 and is required to recruit KDR to ITGB1 complexes. Interacts with SYT7. Palmitoylated at a low, basal level in unstimulated platelets. The level of palmitoylation increases when platelets are activated by thrombin (in vitro).

It localises to the cell membrane. Its subcellular location is the lysosome membrane. The protein localises to the late endosome membrane. The protein resides in the endosome. It is found in the multivesicular body. It localises to the melanosome. Its subcellular location is the secreted. The protein localises to the extracellular exosome. The protein resides in the cell surface. Functions as a cell surface receptor for TIMP1 and plays a role in the activation of cellular signaling cascades. Plays a role in the activation of ITGB1 and integrin signaling, leading to the activation of AKT, FAK/PTK2 and MAP kinases. Promotes cell survival, reorganization of the actin cytoskeleton, cell adhesion, spreading and migration, via its role in the activation of AKT and FAK/PTK2. Plays a role in VEGFA signaling via its role in regulating the internalization of KDR/VEGFR2. Plays a role in intracellular vesicular transport processes, and is required for normal trafficking of the PMEL luminal domain that is essential for the development and maturation of melanocytes. Plays a role in the adhesion of leukocytes onto endothelial cells via its role in the regulation of SELP trafficking. May play a role in mast cell degranulation in response to Ms4a2/FceRI stimulation, but not in mast cell degranulation in response to other stimuli. This is CD63 antigen (CD63) from Oryctolagus cuniculus (Rabbit).